A 56-amino-acid chain; its full sequence is Large ribosomal subunit protein bL33 (56 aa).

This sequence belongs to the bacterial ribosomal protein bL33 family.

The protein is Large ribosomal subunit protein bL33 of Aliarcobacter butzleri (strain RM4018) (Arcobacter butzleri).